The primary structure comprises 198 residues: Probable molybdenum cofactor guanylyltransferase (198 aa).

Residues 9-11, Lys22, Asp66, and Asp95 contribute to the GTP site; that span reads LAG. Asp95 serves as a coordination point for Mg(2+).

This sequence belongs to the MobA family. It depends on Mg(2+) as a cofactor.

It is found in the cytoplasm. It catalyses the reaction Mo-molybdopterin + GTP + H(+) = Mo-molybdopterin guanine dinucleotide + diphosphate. Functionally, transfers a GMP moiety from GTP to Mo-molybdopterin (Mo-MPT) cofactor (Moco or molybdenum cofactor) to form Mo-molybdopterin guanine dinucleotide (Mo-MGD) cofactor. This chain is Probable molybdenum cofactor guanylyltransferase, found in Clostridium perfringens (strain 13 / Type A).